The chain runs to 143 residues: MESTLGSDLARLVRIWRALIDYRLKPLELTQTHWVTLYNISRLPQEQSQIQLAKAIGIEQPSLVRTLDQLEEKKLITRHTCANDRRAKRIKLTEDSASVIRELDGVIESTRNEILGGISREELAFLSTLVQKLEQNIIQLQSR.

The region spanning 2–135 (ESTLGSDLAR…LSTLVQKLEQ (134 aa)) is the HTH marR-type domain. Residues 49–72 (QIQLAKAIGIEQPSLVRTLDQLEE) constitute a DNA-binding region (H-T-H motif).

It belongs to the SlyA family. In terms of assembly, homodimer.

Its function is as follows. Transcription regulator that can specifically activate or repress expression of target genes. Regulates the cpm operon, which contains cpmA, cpmB, cpmC, cpmD, cpmE, cpmF, cpmG and cpmH, involved in carbapenem-like antibiotic production. This chain is Transcriptional regulator SlyA, found in Photorhabdus laumondii subsp. laumondii (strain DSM 15139 / CIP 105565 / TT01) (Photorhabdus luminescens subsp. laumondii).